A 79-amino-acid chain; its full sequence is D-alanyl carrier protein (79 aa).

The Carrier domain maps to 1-77 (MDTKQAVLDI…KIIAKVESLR (77 aa)). Ser35 is subject to O-(pantetheine 4'-phosphoryl)serine.

The protein belongs to the DltC family. In terms of processing, 4'-phosphopantetheine is transferred from CoA to a specific serine of apo-DCP.

It is found in the cytoplasm. Its pathway is cell wall biogenesis; lipoteichoic acid biosynthesis. Carrier protein involved in the D-alanylation of lipoteichoic acid (LTA). The loading of thioester-linked D-alanine onto DltC is catalyzed by D-alanine--D-alanyl carrier protein ligase DltA. The DltC-carried D-alanyl group is further transferred to cell membrane phosphatidylglycerol (PG) by forming an ester bond, probably catalyzed by DltD. D-alanylation of LTA plays an important role in modulating the properties of the cell wall in Gram-positive bacteria, influencing the net charge of the cell wall. The polypeptide is D-alanyl carrier protein (Lactobacillus johnsonii (strain CNCM I-12250 / La1 / NCC 533)).